The sequence spans 506 residues: UDP-N-acetylmuramoyl-L-alanyl-D-glutamate--2,6-diaminopimelate ligase (506 aa).

S38 lines the UDP-N-acetyl-alpha-D-muramoyl-L-alanyl-D-glutamate pocket. 124–130 (GTNGKTS) serves as a coordination point for ATP. UDP-N-acetyl-alpha-D-muramoyl-L-alanyl-D-glutamate contacts are provided by residues 166–167 (TT), S193, and R201. Position 233 is an N6-carboxylysine (K233). Meso-2,6-diaminopimelate is bound by residues R401, 425–428 (DNPR), G477, and E481. Positions 425–428 (DNPR) match the Meso-diaminopimelate recognition motif motif.

It belongs to the MurCDEF family. MurE subfamily. Mg(2+) serves as cofactor. Post-translationally, carboxylation is probably crucial for Mg(2+) binding and, consequently, for the gamma-phosphate positioning of ATP.

It is found in the cytoplasm. It carries out the reaction UDP-N-acetyl-alpha-D-muramoyl-L-alanyl-D-glutamate + meso-2,6-diaminopimelate + ATP = UDP-N-acetyl-alpha-D-muramoyl-L-alanyl-gamma-D-glutamyl-meso-2,6-diaminopimelate + ADP + phosphate + H(+). It participates in cell wall biogenesis; peptidoglycan biosynthesis. In terms of biological role, catalyzes the addition of meso-diaminopimelic acid to the nucleotide precursor UDP-N-acetylmuramoyl-L-alanyl-D-glutamate (UMAG) in the biosynthesis of bacterial cell-wall peptidoglycan. This Leptospira interrogans serogroup Icterohaemorrhagiae serovar copenhageni (strain Fiocruz L1-130) protein is UDP-N-acetylmuramoyl-L-alanyl-D-glutamate--2,6-diaminopimelate ligase.